The chain runs to 1038 residues: Inner tegument protein (1038 aa).

The segment at 545–1038 is interaction with large tegument protein; sequence WGITPPVDVG…VPGNTSGSDP (494 aa).

This sequence belongs to the herpesviridae inner tegument protein family. As to quaternary structure, interacts (via C-terminus) with the large tegument protein/LTP (via N-terminus).

Its subcellular location is the virion tegument. It localises to the host cytoplasm. The protein localises to the host nucleus. The protein resides in the host Golgi apparatus. It is found in the host trans-Golgi network. Plays an essential role in cytoplasmic secondary envelopment during viral egress. Interacts with the capsid via the large tegument protein/LTP and participates in its transport to the host trans-Golgi network (TGN) where secondary envelopment occurs. Modulates tegumentation and capsid accumulation at the viral assembly complex. The chain is Inner tegument protein (21) from Homo sapiens (Human).